Consider the following 215-residue polypeptide: Histidine biosynthesis bifunctional protein HisIE (215 aa).

Residues 1 to 126 (MSHSDLPLAN…GHKSPPPADM (126 aa)) are phosphoribosyl-AMP cyclohydrolase. The segment at 127–215 (LTELARVIGD…VYRKLGDRRR (89 aa)) is phosphoribosyl-ATP pyrophosphohydrolase.

The protein in the N-terminal section; belongs to the PRA-CH family. It in the C-terminal section; belongs to the PRA-PH family.

The protein localises to the cytoplasm. It catalyses the reaction 1-(5-phospho-beta-D-ribosyl)-ATP + H2O = 1-(5-phospho-beta-D-ribosyl)-5'-AMP + diphosphate + H(+). The catalysed reaction is 1-(5-phospho-beta-D-ribosyl)-5'-AMP + H2O = 1-(5-phospho-beta-D-ribosyl)-5-[(5-phospho-beta-D-ribosylamino)methylideneamino]imidazole-4-carboxamide. It functions in the pathway amino-acid biosynthesis; L-histidine biosynthesis; L-histidine from 5-phospho-alpha-D-ribose 1-diphosphate: step 2/9. The protein operates within amino-acid biosynthesis; L-histidine biosynthesis; L-histidine from 5-phospho-alpha-D-ribose 1-diphosphate: step 3/9. In Synechocystis sp. (strain ATCC 27184 / PCC 6803 / Kazusa), this protein is Histidine biosynthesis bifunctional protein HisIE (hisI).